Consider the following 326-residue polypeptide: Acetyl-coenzyme A carboxylase carboxyl transferase subunit beta (326 aa).

Residues 29–298 (LWIKCEACGT…TLISDESLET (270 aa)) form the CoA carboxyltransferase N-terminal domain. The Zn(2+) site is built by Cys-33, Cys-36, Cys-52, and Cys-55. A C4-type zinc finger spans residues 33-55 (CEACGTLTYTKDLQANQMVCPEC). The disordered stretch occupies residues 302-326 (CHLPFQAESHNLSTTDNKIQPTPQG). Positions 309-326 (ESHNLSTTDNKIQPTPQG) are enriched in polar residues.

Belongs to the AccD/PCCB family. As to quaternary structure, acetyl-CoA carboxylase is a heterohexamer composed of biotin carboxyl carrier protein (AccB), biotin carboxylase (AccC) and two subunits each of ACCase subunit alpha (AccA) and ACCase subunit beta (AccD). Requires Zn(2+) as cofactor.

It localises to the cytoplasm. The enzyme catalyses N(6)-carboxybiotinyl-L-lysyl-[protein] + acetyl-CoA = N(6)-biotinyl-L-lysyl-[protein] + malonyl-CoA. It participates in lipid metabolism; malonyl-CoA biosynthesis; malonyl-CoA from acetyl-CoA: step 1/1. Component of the acetyl coenzyme A carboxylase (ACC) complex. Biotin carboxylase (BC) catalyzes the carboxylation of biotin on its carrier protein (BCCP) and then the CO(2) group is transferred by the transcarboxylase to acetyl-CoA to form malonyl-CoA. This is Acetyl-coenzyme A carboxylase carboxyl transferase subunit beta from Trichodesmium erythraeum (strain IMS101).